Consider the following 249-residue polypeptide: Methylthioribulose-1-phosphate dehydratase (249 aa).

Cys102 contributes to the substrate binding site. The Zn(2+) site is built by His120 and His122. Catalysis depends on Glu148, which acts as the Proton donor/acceptor. A Zn(2+)-binding site is contributed by His205.

The protein belongs to the aldolase class II family. MtnB subfamily. Zn(2+) is required as a cofactor.

The protein localises to the cytoplasm. The enzyme catalyses 5-(methylsulfanyl)-D-ribulose 1-phosphate = 5-methylsulfanyl-2,3-dioxopentyl phosphate + H2O. Its pathway is amino-acid biosynthesis; L-methionine biosynthesis via salvage pathway; L-methionine from S-methyl-5-thio-alpha-D-ribose 1-phosphate: step 2/6. Catalyzes the dehydration of methylthioribulose-1-phosphate (MTRu-1-P) into 2,3-diketo-5-methylthiopentyl-1-phosphate (DK-MTP-1-P). The sequence is that of Methylthioribulose-1-phosphate dehydratase from Botryotinia fuckeliana (strain B05.10) (Noble rot fungus).